The chain runs to 384 residues: S-adenosylmethionine synthase (384 aa).

His-15 lines the ATP pocket. Residue Asp-17 coordinates Mg(2+). Residue Glu-43 coordinates K(+). Glu-56 and Gln-99 together coordinate L-methionine. The interval 99 to 109 (QSADINQGVDR) is flexible loop. ATP-binding positions include 164–166 (DAK), 230–231 (RF), Asp-239, 245–246 (RK), Ala-262, and Lys-266. An L-methionine-binding site is contributed by Asp-239. Residue Lys-270 participates in L-methionine binding.

It belongs to the AdoMet synthase family. Homotetramer; dimer of dimers. Mg(2+) serves as cofactor. The cofactor is K(+).

Its subcellular location is the cytoplasm. It carries out the reaction L-methionine + ATP + H2O = S-adenosyl-L-methionine + phosphate + diphosphate. The protein operates within amino-acid biosynthesis; S-adenosyl-L-methionine biosynthesis; S-adenosyl-L-methionine from L-methionine: step 1/1. Catalyzes the formation of S-adenosylmethionine (AdoMet) from methionine and ATP. The overall synthetic reaction is composed of two sequential steps, AdoMet formation and the subsequent tripolyphosphate hydrolysis which occurs prior to release of AdoMet from the enzyme. This is S-adenosylmethionine synthase from Haemophilus influenzae (strain PittEE).